The chain runs to 324 residues: Geranylgeranyl pyrophosphate synthase dpmpD (324 aa).

Residues K50, R53, and H82 each coordinate isopentenyl diphosphate. Residues D89 and D93 each contribute to the Mg(2+) site. R98 is a dimethylallyl diphosphate binding site. Position 99 (R99) interacts with isopentenyl diphosphate. Residues K176, T177, and Q210 each contribute to the dimethylallyl diphosphate site. Position 213 (D213) interacts with Mg(2+). Residues N217, K227, and K237 each contribute to the dimethylallyl diphosphate site.

This sequence belongs to the FPP/GGPP synthase family. The cofactor is Mg(2+).

It carries out the reaction isopentenyl diphosphate + dimethylallyl diphosphate = (2E)-geranyl diphosphate + diphosphate. The catalysed reaction is isopentenyl diphosphate + (2E)-geranyl diphosphate = (2E,6E)-farnesyl diphosphate + diphosphate. The enzyme catalyses isopentenyl diphosphate + (2E,6E)-farnesyl diphosphate = (2E,6E,10E)-geranylgeranyl diphosphate + diphosphate. The protein operates within secondary metabolite biosynthesis; terpenoid biosynthesis. In terms of biological role, geranylgeranyl pyrophosphate synthase; part of the gene cluster that mediates the biosynthesis of diterpenoid pyrones. The first step of the pathway is the synthesis of the alpha-pyrone moiety by the polyketide synthase dpmpA via condensation of one acetyl-CoA starter unit with 3 malonyl-CoA units and 2 methylations. The alpha-pyrone is then combined with geranylgeranyl pyrophosphate (GGPP) formed by the GGPP synthase dpmpD through the action of the prenyltransferase dpmpC to yield a linear alpha-pyrone diterpenoid. Subsequent steps in the diterpenoid pyrone biosynthetic pathway involve the decalin core formation, which is initiated by the epoxidation of the C10-C11 olefin by the FAD-dependent oxidoreductase dpmpE, and is followed by a cyclization cascade catalyzed by the terpene cyclase dpmpB. The short chain dehydrogenase/reductase dpmpG then oxidizes the 8S hydroxy group to a ketone and the short chain dehydrogenase/reductase dpmpH reduces the ketone to the 8R hydroxy group to yield higginsianin B. Higginsianin B is further methylated by the methyltransferase dpmpI to produce the intermediate named FDDP B. The cytochrome P450 monooxygenase dpmpJ then oxidizes the C-26 methyl to primary alcohol, producing the final diterpenoid pyrone with a C-26 primary alcohol on the gamma-pyrone moiety named FDDP C. The protein is Geranylgeranyl pyrophosphate synthase dpmpD of Macrophomina phaseolina (strain MS6) (Charcoal rot fungus).